The chain runs to 394 residues: Chalcone synthase 2 (394 aa).

C167 is an active-site residue.

Belongs to the thiolase-like superfamily. Chalcone/stilbene synthases family.

It carries out the reaction (E)-4-coumaroyl-CoA + 3 malonyl-CoA + 3 H(+) = 2',4,4',6'-tetrahydroxychalcone + 3 CO2 + 4 CoA. It functions in the pathway secondary metabolite biosynthesis; flavonoid biosynthesis. In terms of biological role, the primary product of this enzyme is 4,2',4',6'-tetrahydroxychalcone (also termed naringenin-chalcone or chalcone) which can under specific conditions spontaneously isomerize into naringenin. This chain is Chalcone synthase 2 (CHS2), found in Secale cereale (Rye).